Consider the following 559-residue polypeptide: Actin-binding protein WASF1 (559 aa).

Disordered stretches follow at residues 169–202 (TEDK…DRRR), 307–400 (RPQS…SPPV), and 412–492 (VHPL…STLP). The segment covering 182-202 (KNLDRPHEPEKVPRAPHDRRR) has biased composition (basic and acidic residues). A compositionally biased stretch (pro residues) spans 322 to 332 (PTPPPPPPPLP). The segment covering 333–346 (SALSTSSLRASMTS) has biased composition (low complexity). Arginine 341 carries the asymmetric dimethylarginine; alternate modification. Position 341 is an omega-N-methylarginine; alternate (arginine 341). Composition is skewed to pro residues over residues 347–374 (TPPP…PPAP), 384–399 (PAPP…PSPP), 423–437 (LPPP…PPGI), and 458–477 (TPSP…PPSQ). Serine 489 carries the post-translational modification Phosphoserine. The WH2 domain maps to 497–514 (ARSVLLEAIRKGIQLRKV).

It belongs to the SCAR/WAVE family. As to quaternary structure, component of the WAVE1 complex composed of ABI2, CYFIP1 or CYFIP2, BRK1, NCKAP1 and WASF1/WAVE1. Within the complex, a heterodimer containing NCKAP1 and CYFIP1 interacts with a heterotrimer formed by WAVE1, ABI2 and BRK1. CYFIP2 binds to activated RAC1 which causes the complex to dissociate, releasing activated WASF1. The complex can also be activated by NCK1. Binds actin and the Arp2/3 complex. Interacts with BAIAP2. Interacts with SHANK3; the interaction mediates the association of SHANK3 with the WAVE1 complex. Interacts with ABI1 (via N-terminus). Interacts with SORBS2; this interaction greatly enhances phosphorylation by ABL1 and dephosphorylation by PTPN12 and might mediate partial to focal adhesion sites. In terms of tissue distribution, expressed in hippocampal neurons (at protein level).

It is found in the cytoplasm. It localises to the cytoskeleton. The protein resides in the synapse. Its subcellular location is the cell junction. The protein localises to the focal adhesion. Functionally, downstream effector molecule involved in the transmission of signals from tyrosine kinase receptors and small GTPases to the actin cytoskeleton. Promotes formation of actin filaments. Part of the WAVE complex that regulates lamellipodia formation. The WAVE complex regulates actin filament reorganization via its interaction with the Arp2/3 complex. As component of the WAVE1 complex, required for BDNF-NTRK2 endocytic trafficking and signaling from early endosomes. Also involved in the regulation of mitochondrial dynamics. The chain is Actin-binding protein WASF1 (Wasf1) from Rattus norvegicus (Rat).